The following is a 45-amino-acid chain: Caltrin-like protein 1 (45 aa).

The Kazal-like domain occupies aspartate 8–phenylalanine 45. N-linked (GlcNAc...) asparagine glycosylation is found at asparagine 13 and asparagine 41.

Post-translationally, glycosylated.

Its subcellular location is the secreted. Inhibits calcium transport into spermatozoa. This is Caltrin-like protein 1 from Cavia porcellus (Guinea pig).